The sequence spans 102 residues: Amoebiasin-1 (102 aa).

The BC loop motif lies at 27-32 (NPTTGY). Residues 51–61 (DQHAPGICGCG) carry the DE loop motif. An FG loop motif is present at residues 85–93 (PWAPNANDR).

The protein belongs to the protease inhibitor I42 family. Monomer. During oxidative conditions, forms homooligomers; disulfide-linked. Interacts with cysteine protease CP2. Interacts with cysteine protease CP5. During oxidative conditions, cys-39, cys-58 and cys-60 react to form intra- and inter-molecular disulfide bonds resulting in the loss of the protein inhibitory activity.

It localises to the cytoplasm. Functionally, cysteine protease inhibitor. Inhibits cysteine proteases CP1, CP2 and CP5. May protect the cytosol against cysteine proteases released by damaged intracellular vesicles. The chain is Amoebiasin-1 from Entamoeba histolytica (strain ATCC 30459 / HM-1:IMSS / ABRM).